The sequence spans 430 residues: Enolase (430 aa).

Position 164 (Gln164) interacts with (2R)-2-phosphoglycerate. Catalysis depends on Glu208, which acts as the Proton donor. 3 residues coordinate Mg(2+): Asp245, Glu288, and Asp315. Lys340, Arg369, Ser370, and Lys391 together coordinate (2R)-2-phosphoglycerate. Lys340 functions as the Proton acceptor in the catalytic mechanism.

The protein belongs to the enolase family. Mg(2+) serves as cofactor.

It is found in the cytoplasm. Its subcellular location is the secreted. The protein resides in the cell surface. It catalyses the reaction (2R)-2-phosphoglycerate = phosphoenolpyruvate + H2O. It participates in carbohydrate degradation; glycolysis; pyruvate from D-glyceraldehyde 3-phosphate: step 4/5. Its function is as follows. Catalyzes the reversible conversion of 2-phosphoglycerate (2-PG) into phosphoenolpyruvate (PEP). It is essential for the degradation of carbohydrates via glycolysis. In Thermococcus kodakarensis (strain ATCC BAA-918 / JCM 12380 / KOD1) (Pyrococcus kodakaraensis (strain KOD1)), this protein is Enolase.